Consider the following 419-residue polypeptide: Phosphatidylinositol 5-phosphate 4-kinase type-2 gamma (419 aa).

The region spanning 46 to 418 is the PIPK domain; the sequence is ASDPLISVFM…RFLEFVTNIF (373 aa). Residues 299–310 are compositionally biased toward acidic residues; sequence QEEEEDLEEDHT. The tract at residues 299–320 is disordered; it reads QEEEEDLEEDHTENESSPHMNV.

Post-translationally, phosphorylated, phosphorylation is induced by EGF.

It localises to the endoplasmic reticulum. The protein resides in the cytoplasm. It carries out the reaction a 1,2-diacyl-sn-glycero-3-phospho-(1D-myo-inositol-5-phosphate) + ATP = a 1,2-diacyl-sn-glycero-3-phospho-(1D-myo-inositol-4,5-bisphosphate) + ADP + H(+). The enzyme catalyses 1,2-dihexadecanoyl-sn-glycero-3-phospho-(1D-myo-inositol-5-phosphate) + ATP = 1,2-dihexadecanoyl-sn-glycero-3-phospho-(1D-myo-inositol-4,5-bisphosphate) + ADP + H(+). It catalyses the reaction 1,2-dihexadecanoyl-sn-glycero-3-phospho-(1D-myo-inositol-5-phosphate) + GTP = 1,2-dihexadecanoyl-sn-glycero-3-phospho-(1D-myo-inositol-4,5-bisphosphate) + GDP + H(+). Its function is as follows. Phosphatidylinositol 5-phosphate 4-kinase with low enzymatic activity. May be a GTP sensor, has higher GTP-dependent kinase activity than ATP-dependent kinase activity. The protein is Phosphatidylinositol 5-phosphate 4-kinase type-2 gamma (pip4k2c) of Xenopus tropicalis (Western clawed frog).